A 354-amino-acid chain; its full sequence is Fructose-1,6-bisphosphatase class 1 (354 aa).

The Mg(2+) site is built by glutamate 112, aspartate 134, leucine 136, and aspartate 137. Substrate-binding positions include 137–140, asparagine 229, tyrosine 257, and lysine 287; that span reads DGSS. Glutamate 293 contributes to the Mg(2+) binding site.

Belongs to the FBPase class 1 family. Homotetramer. It depends on Mg(2+) as a cofactor.

Its subcellular location is the cytoplasm. It carries out the reaction beta-D-fructose 1,6-bisphosphate + H2O = beta-D-fructose 6-phosphate + phosphate. Its pathway is carbohydrate biosynthesis; Calvin cycle. The sequence is that of Fructose-1,6-bisphosphatase class 1 from Trichodesmium erythraeum (strain IMS101).